The primary structure comprises 320 residues: o-succinylbenzoate synthase (320 aa).

The active-site Proton donor is Lys133. Mg(2+) contacts are provided by Asp161, Glu190, and Asp213. The active-site Proton acceptor is Lys235.

This sequence belongs to the mandelate racemase/muconate lactonizing enzyme family. MenC type 1 subfamily. A divalent metal cation is required as a cofactor.

The catalysed reaction is (1R,6R)-6-hydroxy-2-succinyl-cyclohexa-2,4-diene-1-carboxylate = 2-succinylbenzoate + H2O. Its pathway is quinol/quinone metabolism; 1,4-dihydroxy-2-naphthoate biosynthesis; 1,4-dihydroxy-2-naphthoate from chorismate: step 4/7. It functions in the pathway quinol/quinone metabolism; menaquinone biosynthesis. Converts 2-succinyl-6-hydroxy-2,4-cyclohexadiene-1-carboxylate (SHCHC) to 2-succinylbenzoate (OSB). This Salmonella paratyphi B (strain ATCC BAA-1250 / SPB7) protein is o-succinylbenzoate synthase.